We begin with the raw amino-acid sequence, 117 residues long: Large ribosomal subunit protein uL18 (117 aa).

This sequence belongs to the universal ribosomal protein uL18 family. As to quaternary structure, part of the 50S ribosomal subunit; part of the 5S rRNA/L5/L18/L25 subcomplex. Contacts the 5S and 23S rRNAs.

This is one of the proteins that bind and probably mediate the attachment of the 5S RNA into the large ribosomal subunit, where it forms part of the central protuberance. The protein is Large ribosomal subunit protein uL18 of Phytoplasma australiense.